The sequence spans 357 residues: Non-structural protein NS2 (357 aa).

Disordered regions lie at residues 169–191 and 229–266; these read PRLQ…DEAK and DERD…HPKT. The span at 233–249 shows a compositional bias: basic and acidic residues; sequence EGDRDERGDEEQVKTLS. A compositionally biased stretch (acidic residues) spans 250–260; it reads DDDDQGEDASD.

It belongs to the orbivirus non-structural protein NS2 family.

Its function is as follows. Single-stranded RNA-binding protein. This Antilocapra americana (Pronghorn) protein is Non-structural protein NS2 (Segment-8).